We begin with the raw amino-acid sequence, 445 residues long: MAGGMKVAVLPAVGAGPWSWGAGGCGAVRLLLVLFGCFVCGSAGIDLNVVTLRESEILFMNTSRQSCYKNVLIPKWHDIWTRIQIRVNSSKLVRVTQVENEDKLKELEQFSIWNFFSSFLKEKLNDTYINVGLYSTKTCLKVEILEEDTKYSVIVTRRFDPKLFLIFLLGLTLFFCGDLLSRSQIFYYSTGMSVGIVASLLIIIFIVSKFMPKKSPIYIILVGGWSFSLYLIQLVFKNLQEIWRCYWQYLLSYVLAVGFMSFAVCYKYGPLENERSINLLTWTLQLLGLCFMYSSIQIPHIALAIVVIALCTKNLDYPIHWLYITYRKMCKATEKTVPPRLLTEEEYRLQGEVETRKALEQLREYCNSPDCSAWKTVSRIQSPKRFADFVEGSFHLTPNEVSVHEQEYGLGSIIAQDELSEETSSEEEDSDSRYPLVVQQNSFLT.

Positions 1–44 are cleaved as a signal peptide; the sequence is MAGGMKVAVLPAVGAGPWSWGAGGCGAVRLLLVLFGCFVCGSAG. N-linked (GlcNAc...) asparagine glycosylation is present at N125. The next 5 membrane-spanning stretches (helical) occupy residues 161–181, 186–206, 216–236, 245–265, and 289–309; these read PKLF…DLLS, FYYS…IIFI, PIYI…QLVF, CYWQ…FAVC, and LCFM…VVIA. The interval 186 to 297 is a; required for its colocalization with lamins at the nuclear envelope; that stretch reads FYYSTGMSVG…GLCFMYSSIQ (112 aa). Residues 336–405 form a b; required for interaction with RAN-GTP region; that stretch reads TVPPRLLTEE…LTPNEVSVHE (70 aa). Positions 336–445 are required for nuclear localization; it reads TVPPRLLTEE…LVVQQNSFLT (110 aa). Phosphoserine occurs at positions 368, 424, and 425. Residues 418–430 show a composition bias toward acidic residues; that stretch reads ELSEETSSEEEDS. Positions 418 to 445 are disordered; it reads ELSEETSSEEEDSDSRYPLVVQQNSFLT.

It belongs to the NEMP family. As to quaternary structure, homooligomer. Interacts with RAN-GTP. Interacts with EMD. Post-translationally, phosphorylation may regulate its interaction with RAN-GTP.

Its subcellular location is the nucleus inner membrane. The protein resides in the nucleus envelope. In terms of biological role, together with EMD, contributes to nuclear envelope stiffness in germ cells. Required for female fertility. Essential for normal erythropoiesis. Required for efficient nuclear envelope opening and enucleation during the late stages of erythroblast maturation. In Bos taurus (Bovine), this protein is Nuclear envelope integral membrane protein 1 (NEMP1).